Consider the following 183-residue polypeptide: Adenine phosphoribosyltransferase (183 aa).

This sequence belongs to the purine/pyrimidine phosphoribosyltransferase family. Homodimer.

The protein localises to the cytoplasm. It catalyses the reaction AMP + diphosphate = 5-phospho-alpha-D-ribose 1-diphosphate + adenine. It functions in the pathway purine metabolism; AMP biosynthesis via salvage pathway; AMP from adenine: step 1/1. In terms of biological role, catalyzes a salvage reaction resulting in the formation of AMP, that is energically less costly than de novo synthesis. The polypeptide is Adenine phosphoribosyltransferase (Edwardsiella ictaluri (strain 93-146)).